The chain runs to 575 residues: MAKPFFRLQKFLRRTQFLLFFLTAAYLMTGSLLLLQRVRVALPQGPRAPGPLQTLPVAAVALGVGLLDSRALHDPRVSPELLLGVDMLQSPLTRPRPGPRWLRSRNSELRQLRRRWFHHFMSDSQGPPALGPEAARPAIHSRGTYIGCFSDDGHERTLKGAVFYDLRKMTVSHCQDACAERSYVYAGLEAGAECYCGNRLPAVSVGLEECNHECKGEKGSVCGAVDRLSVYRVDELQPGSRKRRTATYRGCFRLPENITHAFPSSLIQANVTVGTCSGFCSQKEFPLAILRGWECYCAYPTPRFNLRDAMDSSVCGQDPEAQRLAEYCEVYQTPVQDTRCTDRRFLPNKSKVFVALSSFPGAGNTWARHLIEHATGFYTGSYYFDGTLYNKGFKGEKDHWRSRRTICVKTHESGRREIEMFDSAILLIRNPYRSLVAEFNRKCAGHLGYAADRNWKSKEWPDFVNSYASWWSSHVLDWLKYGKRLLVVHYEELRRSLVPTLREMVAFLNVSVSEERLLCVENNKEGSFRRRGRRSHDPEPFTPEMKDLINGYIRTVDQALRDHNWTGLPREYVPR.

Residues 1-14 (MAKPFFRLQKFLRR) are Cytoplasmic-facing. Residues 15–35 (TQFLLFFLTAAYLMTGSLLLL) form a helical; Signal-anchor for type II membrane protein membrane-spanning segment. The Extracellular portion of the chain corresponds to 36-575 (QRVRVALPQG…TGLPREYVPR (540 aa)). WSC domains lie at 142–234 (RGTY…YRVD) and 245–340 (TATY…DTRC). N-linked (GlcNAc...) asparagine glycosylation is found at asparagine 257 and asparagine 348.

Belongs to the WSCD family.

Its subcellular location is the golgi apparatus membrane. The enzyme catalyses a ganglioside GM1b + 3'-phosphoadenylyl sulfate = an 8-O-sulfo-ganglioside GM1b + adenosine 3',5'-bisphosphate + H(+). Its function is as follows. Sialate:O-sulfotransferase which catalyzes 8-O-sulfation at the Sia-glycan level using 3'-phosphoadenosine 5'-phosphosulfate (PAPS) as a donor, forming 8-O-sulfated Sia (Sia8S)-glycans. Displays selectivity toward glycolipids such as GM1 gangliosides. The chain is Sialate:O-sulfotransferase 1 (WSCD1) from Homo sapiens (Human).